A 200-amino-acid chain; its full sequence is MAEPVIVVPRKGVYSDDSYHHHHRHHSFHSCTNFLLRTLTAGATAAAVVVMLISTQTSGTIYGYFRGRWRDYPAYKWLIIANAVVFVYSVMAAIVACFSVIARRGPLSYSPSAWLTLLVDFLAASALISAASAALAVALLARNGQDLQGTHYWPTVCNYVSKFCDYTQGAIIASFVGFGLLFLSTLLAASALYHLSHRRH.

At 1–33 (MAEPVIVVPRKGVYSDDSYHHHHRHHSFHSCTN) the chain is on the cytoplasmic side. A helical transmembrane segment spans residues 34 to 54 (FLLRTLTAGATAAAVVVMLIS). Residues 55 to 77 (TQTSGTIYGYFRGRWRDYPAYKW) are Extracellular-facing. The chain crosses the membrane as a helical span at residues 78-98 (LIIANAVVFVYSVMAAIVACF). The Cytoplasmic segment spans residues 99–120 (SVIARRGPLSYSPSAWLTLLVD). The helical transmembrane segment at 121 to 141 (FLAASALISAASAALAVALLA) threads the bilayer. Residues 142 to 168 (RNGQDLQGTHYWPTVCNYVSKFCDYTQ) lie on the Extracellular side of the membrane. The chain crosses the membrane as a helical span at residues 169-189 (GAIIASFVGFGLLFLSTLLAA). The Cytoplasmic segment spans residues 190–200 (SALYHLSHRRH).

The protein belongs to the Casparian strip membrane proteins (CASP) family. In terms of assembly, homodimer and heterodimers.

It localises to the cell membrane. The protein is CASP-like protein 1U2 of Physcomitrium patens (Spreading-leaved earth moss).